Consider the following 186-residue polypeptide: ATP synthase subunit b 3 (186 aa).

The helical transmembrane segment at 5–25 (LLPALLTFSATPALAAKGPFF) threads the bilayer.

This sequence belongs to the ATPase B chain family. F-type ATPases have 2 components, F(1) - the catalytic core - and F(0) - the membrane proton channel. F(1) has five subunits: alpha(3), beta(3), gamma(1), delta(1), epsilon(1). F(0) has three main subunits: a(1), b(2) and c(10-14). The alpha and beta chains form an alternating ring which encloses part of the gamma chain. F(1) is attached to F(0) by a central stalk formed by the gamma and epsilon chains, while a peripheral stalk is formed by the delta and b chains.

Its subcellular location is the cell inner membrane. In terms of biological role, f(1)F(0) ATP synthase produces ATP from ADP in the presence of a proton or sodium gradient. F-type ATPases consist of two structural domains, F(1) containing the extramembraneous catalytic core and F(0) containing the membrane proton channel, linked together by a central stalk and a peripheral stalk. During catalysis, ATP synthesis in the catalytic domain of F(1) is coupled via a rotary mechanism of the central stalk subunits to proton translocation. Its function is as follows. Component of the F(0) channel, it forms part of the peripheral stalk, linking F(1) to F(0). The polypeptide is ATP synthase subunit b 3 (Dinoroseobacter shibae (strain DSM 16493 / NCIMB 14021 / DFL 12)).